The primary structure comprises 368 residues: Flagellar P-ring protein (368 aa).

A signal peptide spans 1–24 (MNSIFRKIVFAAFLLLALPQFALA).

Belongs to the FlgI family. In terms of assembly, the basal body constitutes a major portion of the flagellar organelle and consists of four rings (L,P,S, and M) mounted on a central rod.

The protein localises to the periplasm. Its subcellular location is the bacterial flagellum basal body. Assembles around the rod to form the L-ring and probably protects the motor/basal body from shearing forces during rotation. The sequence is that of Flagellar P-ring protein from Geotalea uraniireducens (strain Rf4) (Geobacter uraniireducens).